We begin with the raw amino-acid sequence, 268 residues long: Protein c-ets-1-B (268 aa).

The tract at residues 131 to 139 (FKDYVRDRA) is helix HI-1. A helix HI-2 region spans residues 150 to 157 (AAALAGYT). Positions 162–242 (IQLWQFLLEL…AGKRYVYRFV (81 aa)) form a DNA-binding region, ETS. The helix H4 stretch occupies residues 245–249 (LQSLL). Residues 253 to 259 (PEELHAM) are helix H5.

It belongs to the ETS family. Binds DNA as a homodimer; homodimerization is required for transcription activation.

Its subcellular location is the nucleus. It is found in the cytoplasm. Its activity is regulated as follows. Autoinhibited by a module composed of four alpha helices (HI-1, HI-2, H4, and H5) that flank the DNA-binding ETS domain, reducing the affinity for DNA. In terms of biological role, transcription factor. Directly controls the expression of cytokine and chemokine genes in a wide variety of different cellular contexts. The chain is Protein c-ets-1-B (ets1-b) from Xenopus laevis (African clawed frog).